Here is a 150-residue protein sequence, read N- to C-terminus: Triosephosphate isomerase (150 aa).

The substrate site is built by asparagine 9 and lysine 11. Catalysis depends on histidine 95, which acts as the Electrophile.

Belongs to the triosephosphate isomerase family. As to quaternary structure, homodimer.

The protein resides in the cytoplasm. The catalysed reaction is D-glyceraldehyde 3-phosphate = dihydroxyacetone phosphate. It functions in the pathway carbohydrate biosynthesis; gluconeogenesis. Its pathway is carbohydrate degradation; glycolysis; D-glyceraldehyde 3-phosphate from glycerone phosphate: step 1/1. In Mycoplasmoides pirum (Mycoplasma pirum), this protein is Triosephosphate isomerase (tpiA).